A 98-amino-acid chain; its full sequence is NADH-ubiquinone oxidoreductase chain 4L (98 aa).

3 helical membrane-spanning segments follow: residues 1–21 (MPFI…GLLM), 29–49 (SLLC…LLCL), and 61–81 (MILL…LVMV).

Belongs to the complex I subunit 4L family. As to quaternary structure, core subunit of respiratory chain NADH dehydrogenase (Complex I) which is composed of 45 different subunits.

The protein localises to the mitochondrion inner membrane. It carries out the reaction a ubiquinone + NADH + 5 H(+)(in) = a ubiquinol + NAD(+) + 4 H(+)(out). In terms of biological role, core subunit of the mitochondrial membrane respiratory chain NADH dehydrogenase (Complex I) which catalyzes electron transfer from NADH through the respiratory chain, using ubiquinone as an electron acceptor. Part of the enzyme membrane arm which is embedded in the lipid bilayer and involved in proton translocation. This Dugong dugon (Dugong) protein is NADH-ubiquinone oxidoreductase chain 4L (MT-ND4L).